Consider the following 2705-residue polypeptide: Teneurin-1 (2705 aa).

Disordered stretches follow at residues Met1 to Asp73 and Cys135 to Ser222. Positions Met1–Cys299 constitute a Teneurin N-terminal domain. The Cytoplasmic segment spans residues Met1–Thr305. Residues Asp32–Leu46 are compositionally biased toward basic and acidic residues. The Nuclear localization signal (NLS) signature appears at Arg62–Lys65. The segment covering Cys135–Thr147 has biased composition (polar residues). The span at Asp148–Gly157 shows a compositional bias: basic and acidic residues. The segment covering Pro173–His182 has biased composition (pro residues). Positions Pro271 to Arg278 match the Required for interaction with SORBS1 (Ten-1 ICD form) motif. A helical transmembrane segment spans residues Ala306–Leu326. The Extracellular segment spans residues Thr327–Arg2705. A glycan (N-linked (GlcNAc...) asparagine) is linked at Asn414. 8 EGF-like domains span residues Val509–Ala540, Lys541–Val572, Pro573–Glu605, Glu606–Thr638, Ser639–Ser672, Thr673–Cys702, Glu703–Thr734, and Ile735–Asn769. Intrachain disulfides connect Cys513/Cys523, Cys517/Cys528, Cys530/Cys539, Cys548/Cys559, Cys561/Cys570, Cys577/Cys588, Cys582/Cys593, Cys595/Cys604, Cys609/Cys620, Cys614/Cys625, Cys627/Cys636, Cys647/Cys660, Cys662/Cys671, Cys676/Cys686, Cys680/Cys691, Cys693/Cys702, Cys707/Cys717, Cys711/Cys722, Cys724/Cys733, Cys738/Cys748, Cys742/Cys757, and Cys759/Cys768. 2 N-linked (GlcNAc...) asparagine glycosylation sites follow: Asn878 and Asn1057. 5 NHL repeats span residues Leu1167–Ile1192, Leu1202–Leu1246, Ser1272–Ile1316, Leu1331–Arg1382, and Cys1461–Asn1504. Residues Tyr1514 to His1533 form a YD 1 repeat. N-linked (GlcNAc...) asparagine glycosylation is found at Asn1530 and Asn1547. 4 YD repeats span residues Tyr1550 to Arg1570, Tyr1588 to Thr1612, Tyr1613 to Glu1634, and Tyr1635 to His1655. Asn1643, Asn1679, Asn1737, Asn1761, and Asn1822 each carry an N-linked (GlcNAc...) asparagine glycan. YD repeat units lie at residues Tyr1825–Glu1844, Tyr1845–Thr1865, Tyr1866–Glu1884, Tyr1885–Gln1905, Tyr1913–Asp1929, Val1930–Leu1949, Tyr1950–Thr1969, Tyr1972–Thr1992, Tyr1995–Val2015, Tyr2065–Asn2085, and Tyr2093–Met2113. Asn2125 carries N-linked (GlcNAc...) asparagine glycosylation. 5 YD repeats span residues Tyr2133–Ser2153, Tyr2154–Leu2174, Tyr2176–Gly2196, Tyr2208–Tyr2228, and Tyr2230–Phe2250. Asn2265 carries an N-linked (GlcNAc...) asparagine glycan. YD repeat units follow at residues Tyr2276–Tyr2293 and Tyr2294–Ile2317. A glycan (N-linked (GlcNAc...) asparagine) is linked at Asn2582.

Belongs to the tenascin family. Teneurin subfamily. As to quaternary structure, homodimer; disulfide-linked. Heterodimer with other teneurins. Ten-1 ICD interacts with SORBS1 (via third SH3 domain). Interacts with MBD1 isoform 2. Post-translationally, derives from the plasma membrane form by proteolytic processing. Further proteolytic cleavage may be generated. Derives from the plasma membrane form by proteolytic cleavage and translocates to the nucleus. As to expression, expressed in the neurons of the developing visual system and in fetal brain.

The protein resides in the cell membrane. It localises to the nucleus. It is found in the nucleus speckle. The protein localises to the nucleus matrix. Its subcellular location is the cytoplasm. The protein resides in the cytoskeleton. Involved in neural development, regulating the establishment of proper connectivity within the nervous system. May function as a cellular signal transducer. Its function is as follows. Plays a role in the regulation of neuroplasticity in the limbic system. Mediates a rapid reorganization of actin- and tubulin-based cytoskeleton elements with an increase in dendritic arborization and spine density formation of neurons in the hippocampus and amygdala. Induces BDNF transcription inhibition in neurons. Activates the mitogen-activated protein (MAP) kinase 2 (MEK2) and extracellular signal-regulated kinase (ERK) cascade. In terms of biological role, induces gene transcription activation. The chain is Teneurin-1 (TENM1) from Gallus gallus (Chicken).